A 33-amino-acid polypeptide reads, in one-letter code: Cecropin-B (33 aa).

Lys-21 carries the post-translational modification 5-hydroxylysine.

Monomer. In terms of tissue distribution, hemolymph.

It is found in the secreted. Cecropins have lytic and antibacterial activity against several Gram-positive and Gram-negative bacteria. Also has activity against fungi. The polypeptide is Cecropin-B (Heliothis virescens (Tobacco budworm moth)).